The sequence spans 1161 residues: BMP-2-inducible protein kinase (1161 aa).

Residues 1–20 form a disordered region; the sequence is MKKFSRMPKSEGGSGGGAAG. Residue Ser-14 is modified to Phosphoserine. Residues 51-316 enclose the Protein kinase domain; it reads VTLEESLAEG…DIFQVSYFAF (266 aa). ATP contacts are provided by residues 57-65 and Lys-79; that span reads LAEGGFSTV. Residue Asp-180 is the Proton acceptor of the active site. 4 disordered regions span residues 358 to 439, 453 to 495, 610 to 630, and 655 to 832; these read TDTI…RVLQ, LQHR…HHHL, TNQK…FGED, and ERAS…TQDL. A compositionally biased stretch (polar residues) spans 361 to 394; sequence IGPTETSIAPRQRPKANSATTATPSVLTIQSSAT. Low complexity-rich tracts occupy residues 422 to 439 and 460 to 485; these read LLGQ…RVLQ and QQQQ…QQQQ. Positions 610–619 are enriched in polar residues; that stretch reads TNQKNISNPP. Position 689 is a phosphoserine (Ser-689). Polar residues-rich tracts occupy residues 697–718 and 726–735; these read SSIN…SPAS and KTSVQGQVQK. Ser-742 carries the post-translational modification Phosphoserine. The span at 755–779 shows a compositional bias: acidic residues; the sequence is EEEEQDDEEVLQGEQGDFNDDDTEP. A compositionally biased stretch (basic and acidic residues) spans 798–813; sequence EKHSSDSDYEQAKAKY. Phosphoserine occurs at positions 817 and 818. Position 834 is a phosphothreonine (Thr-834). Phosphoserine is present on Ser-928. The tract at residues 965–1035 is disordered; sequence SQQQKVKQRS…RRDSQSSNEF (71 aa). Over residues 970–984 the composition is skewed to basic residues; sequence VKQRSLQKLSSRQRR. The span at 1000–1011 shows a compositional bias: low complexity; that stretch reads TPTSTKKTLKPT. Phosphoserine occurs at positions 1029, 1031, 1032, 1039, 1041, 1076, 1107, and 1111. Over residues 1137-1146 the composition is skewed to polar residues; that stretch reads TPHQSQQSQP. A disordered region spans residues 1137–1161; that stretch reads TPHQSQQSQPVELDPFGAAPFPSKQ.

This sequence belongs to the protein kinase superfamily. Ser/Thr protein kinase family. Post-translationally, autophosphorylated.

It is found in the nucleus. It catalyses the reaction L-seryl-[protein] + ATP = O-phospho-L-seryl-[protein] + ADP + H(+). The catalysed reaction is L-threonyl-[protein] + ATP = O-phospho-L-threonyl-[protein] + ADP + H(+). Functionally, may be involved in osteoblast differentiation. The chain is BMP-2-inducible protein kinase (BMP2K) from Homo sapiens (Human).